We begin with the raw amino-acid sequence, 72 residues long: UPF0154 protein BH2350 (72 aa).

The helical transmembrane segment at 3 to 23 (WMILLWITLGIVIGIAIGFFI) threads the bilayer.

It belongs to the UPF0154 family.

Its subcellular location is the membrane. In Halalkalibacterium halodurans (strain ATCC BAA-125 / DSM 18197 / FERM 7344 / JCM 9153 / C-125) (Bacillus halodurans), this protein is UPF0154 protein BH2350.